Here is a 109-residue protein sequence, read N- to C-terminus: Trafficking protein particle complex subunit 2-like protein (109 aa).

It belongs to the TRAPP small subunits family. Sedlin subfamily. In terms of assembly, component of the multisubunit TRAPP (transport protein particle) complex, which includes at least TRAPPC2, TRAPPC2L, TRAPPC3, TRAPPC3L, TRAPPC4, TRAPPC5, TRAPPC8, TRAPPC9, TRAPPC10, TRAPPC11 and TRAPPC12. Interacts with the heterodimer TRAPPC3-TRAPPC6A.

The protein resides in the cytoplasm. It is found in the perinuclear region. It localises to the endoplasmic reticulum. Its subcellular location is the golgi apparatus. Its function is as follows. May play a role in vesicular transport from endoplasmic reticulum to Golgi. The chain is Trafficking protein particle complex subunit 2-like protein (TRAPPC2L) from Pongo abelii (Sumatran orangutan).